Consider the following 270-residue polypeptide: ATP synthase subunit a (270 aa).

The next 5 membrane-spanning stretches (helical) occupy residues 37–57, 98–118, 143–163, 217–237, and 239–259; these read NVHIDSLFFSVFTGMLFLWVF, IAPLALTIFCWVILMNLMDLV, DVNITMAMALGVFALMIYYSI, VVFILIAAMLPWYLQWVGALP, and AIFHILVILIQAFVFMMLTIV.

Belongs to the ATPase A chain family. As to quaternary structure, F-type ATPases have 2 components, CF(1) - the catalytic core - and CF(0) - the membrane proton channel. CF(1) has five subunits: alpha(3), beta(3), gamma(1), delta(1), epsilon(1). CF(0) has three main subunits: a(1), b(2) and c(9-12). The alpha and beta chains form an alternating ring which encloses part of the gamma chain. CF(1) is attached to CF(0) by a central stalk formed by the gamma and epsilon chains, while a peripheral stalk is formed by the delta and b chains.

The protein resides in the cell inner membrane. Functionally, key component of the proton channel; it plays a direct role in the translocation of protons across the membrane. This Aliivibrio fischeri (strain ATCC 700601 / ES114) (Vibrio fischeri) protein is ATP synthase subunit a.